A 137-amino-acid polypeptide reads, in one-letter code: Ciliary microtubule inner protein 1 (137 aa).

Expressed in airway epithelial cells, renal tubular cells, pancreatic acinar cells and epithelial cells of the stomach, duodenum, and gallbladder (at protein level).

It localises to the cell projection. The protein resides in the cilium. In Homo sapiens (Human), this protein is Ciliary microtubule inner protein 1.